Here is a 41-residue protein sequence, read N- to C-terminus: Large ribosomal subunit protein bL36 (41 aa).

This sequence belongs to the bacterial ribosomal protein bL36 family.

In Sinorhizobium fredii (strain NBRC 101917 / NGR234), this protein is Large ribosomal subunit protein bL36.